Reading from the N-terminus, the 73-residue chain is U3-agatoxin-Ao1i (73 aa).

Positions 1–20 are cleaved as a signal peptide; it reads MRTIISLLLLSAMVFAEIEA. The propeptide occupies 21 to 34; that stretch reads ISLEEGLQLFEGER. 4 disulfides stabilise this stretch: Cys-36/Cys-52, Cys-43/Cys-57, Cys-51/Cys-67, and Cys-59/Cys-65. Serine amide is present on Ser-71.

This sequence belongs to the neurotoxin 07 (Beta/delta-agtx) family. 03 (aga-4) subfamily. Aga sub-subfamily. In terms of tissue distribution, expressed by the venom gland.

It is found in the secreted. Insecticidal neurotoxin that induces an irreversible spastic paralysis when injected into insects. Modifies presynaptic voltage-gated sodium channels (Nav), causing them to open at the normal resting potential of the nerve. This leads to spontaneous release of neurotransmitter and repetitive action potentials in motor neurons. This chain is U3-agatoxin-Ao1i, found in Agelena orientalis (Funnel-web spider).